The chain runs to 381 residues: Probable tRNA sulfurtransferase (381 aa).

Residues 52-155 form the THUMP domain; sequence LTNLDALKYV…DASTYIFIDY (104 aa). Residues 173–174, 198–199, Arg255, Gly277, and Gln286 contribute to the ATP site; these read LM and NF.

The protein belongs to the ThiI family.

It localises to the cytoplasm. It catalyses the reaction [ThiI sulfur-carrier protein]-S-sulfanyl-L-cysteine + a uridine in tRNA + 2 reduced [2Fe-2S]-[ferredoxin] + ATP + H(+) = [ThiI sulfur-carrier protein]-L-cysteine + a 4-thiouridine in tRNA + 2 oxidized [2Fe-2S]-[ferredoxin] + AMP + diphosphate. It carries out the reaction [ThiS sulfur-carrier protein]-C-terminal Gly-Gly-AMP + S-sulfanyl-L-cysteinyl-[cysteine desulfurase] + AH2 = [ThiS sulfur-carrier protein]-C-terminal-Gly-aminoethanethioate + L-cysteinyl-[cysteine desulfurase] + A + AMP + 2 H(+). Its pathway is cofactor biosynthesis; thiamine diphosphate biosynthesis. Functionally, catalyzes the ATP-dependent transfer of a sulfur to tRNA to produce 4-thiouridine in position 8 of tRNAs, which functions as a near-UV photosensor. Also catalyzes the transfer of sulfur to the sulfur carrier protein ThiS, forming ThiS-thiocarboxylate. This is a step in the synthesis of thiazole, in the thiamine biosynthesis pathway. The sulfur is donated as persulfide by IscS. The sequence is that of Probable tRNA sulfurtransferase from Metamycoplasma arthritidis (strain 158L3-1) (Mycoplasma arthritidis).